We begin with the raw amino-acid sequence, 215 residues long: Adenylate kinase (215 aa).

Position 10–15 (10–15 (GAGKGT)) interacts with ATP. The NMP stretch occupies residues 30–59 (STGDMFRLAIKEGTELGKKAKEFMDQGDLV). AMP contacts are provided by residues threonine 31, arginine 36, 57–59 (DLV), 85–88 (GFPR), and glutamine 92. The LID stretch occupies residues 126-163 (GRRICPTCGTAYHVVYNPPKEEGICDKDGSQLIQRDDD). Arginine 127 contacts ATP. Residues cysteine 130, cysteine 133, cysteine 150, and aspartate 153 each contribute to the Zn(2+) site. AMP-binding residues include arginine 160 and arginine 171. Arginine 199 serves as a coordination point for ATP.

The protein belongs to the adenylate kinase family. In terms of assembly, monomer.

The protein localises to the cytoplasm. The enzyme catalyses AMP + ATP = 2 ADP. It functions in the pathway purine metabolism; AMP biosynthesis via salvage pathway; AMP from ADP: step 1/1. In terms of biological role, catalyzes the reversible transfer of the terminal phosphate group between ATP and AMP. Plays an important role in cellular energy homeostasis and in adenine nucleotide metabolism. This Oceanobacillus iheyensis (strain DSM 14371 / CIP 107618 / JCM 11309 / KCTC 3954 / HTE831) protein is Adenylate kinase.